We begin with the raw amino-acid sequence, 1040 residues long: Kinesin-like protein KIN-14H (1040 aa).

Residues 54 to 176 (DLRRYEAARW…CVLALKSYRE (123 aa)) form the Calponin-homology (CH) domain. Residues 208 to 242 (SEVPVDAVTNSPSSTPSSEQPLLDQSDSNTKNDGT) form a disordered region. Polar residues predominate over residues 215–242 (VTNSPSSTPSSEQPLLDQSDSNTKNDGT). The Kinesin motor domain maps to 434–754 (SIRVYCRVRP…LKFAERVATV (321 aa)). Residue 517 to 524 (GQTGSGKT) coordinates ATP. Residues 761–796 (VNKDTSEVKELKEQIASLKLALARKESGADQTQLQR) adopt a coiled-coil conformation. Low complexity predominate over residues 809–818 (LGVSSSFSKS). 3 disordered regions span residues 809–871 (LGVS…GKEE), 887–926 (EDEITRSSKPENRAHTQLEKRTSSLKREATRGVDKNKCNS), and 969–1040 (MPRP…QNPK). Positions 840–851 (IEGQSDSASSLD) are enriched in polar residues. A compositionally biased stretch (basic and acidic residues) spans 887–923 (EDEITRSSKPENRAHTQLEKRTSSLKREATRGVDKNK). Residues 1018-1031 (SPGQTSSRHNNSTV) show a composition bias toward polar residues.

It belongs to the TRAFAC class myosin-kinesin ATPase superfamily. Kinesin family. KIN-14 subfamily.

The sequence is that of Kinesin-like protein KIN-14H from Arabidopsis thaliana (Mouse-ear cress).